The primary structure comprises 69 residues: DNA-directed RNA polymerase subunit omega (69 aa).

This sequence belongs to the RNA polymerase subunit omega family. In terms of assembly, the RNAP catalytic core consists of 2 alpha, 1 beta, 1 beta' and 1 omega subunit. When a sigma factor is associated with the core the holoenzyme is formed, which can initiate transcription.

The enzyme catalyses RNA(n) + a ribonucleoside 5'-triphosphate = RNA(n+1) + diphosphate. Its function is as follows. Promotes RNA polymerase assembly. Latches the N- and C-terminal regions of the beta' subunit thereby facilitating its interaction with the beta and alpha subunits. The sequence is that of DNA-directed RNA polymerase subunit omega from Heliobacterium modesticaldum (strain ATCC 51547 / Ice1).